Here is a 603-residue protein sequence, read N- to C-terminus: Aquaporin-2 (603 aa).

The chain crosses the membrane as a helical span at residues 40–70; it reads SLKKYKYNLFFEFIGSFLFVFFISIYMLNSN. Composition is skewed to basic and acidic residues over residues 135-149 and 156-190; these read NNKS…DDKI and EFEK…EDPK. The segment at 135–200 is disordered; it reads NNKSKREVER…NISNKNENYD (66 aa). A compositionally biased stretch (polar residues) spans 191–200; that stretch reads NISNKNENYD. A run of 5 helical transmembrane segments spans residues 282-299, 321-346, 360-393, 442-471, and 509-542; these read HAIY…FILL, FALS…AHLY, IIKT…EENK, NKYI…VTNT, and ITKI…FLSL.

Belongs to the MIP/aquaporin (TC 1.A.8) family.

It is found in the endomembrane system. It catalyses the reaction H2O(in) = H2O(out). The enzyme catalyses glycerol(in) = glycerol(out). In terms of biological role, required for sporozoite development in the mosquito vector. In Plasmodium falciparum (isolate NF54), this protein is Aquaporin-2.